A 68-amino-acid polypeptide reads, in one-letter code: Large ribosomal subunit protein uL29 (68 aa).

This sequence belongs to the universal ribosomal protein uL29 family.

The protein is Large ribosomal subunit protein uL29 of Streptococcus thermophilus (strain ATCC BAA-250 / LMG 18311).